The chain runs to 444 residues: MNITETSADGLKREYKVVISAQDIEQKVQGRLEELRRTVQLPGFRPGKVPVAVIKQRYGGSVLAEALEDAIADSSRQALNERGLRIAMQPKINVEKYEDGGDLSYTMGVELLPDIEPGDLSGLELEKPVATVEDSAVDEALTRLASAHSVQAPVTEDRAAEKGDIAVIDSPVRSTGEALPGMDGKDYPLELGANQFVPGFEDQLVGAKAGEHRTVKVTFPADYPHDRLKGADTVFEVDVKELRKNVPAEVNDDLAKEFGMESLEKLREAVGRPHQGRIRQRVALRVKRQLLDKLAEAHSFEVPPGMVDVEFEGIWQRLQQELQNGTAGEDAGKPEEELKTEYRGIAERRVRLGLLLSEIGRRNDIQVTQDEINRALIAEARRFPGQERQVFEFFKQNREALENLRAPIFEDKVVDYILDQAKVSEKPVSAEELMKDPDEEAEAA.

The region spanning 163-248 (GDIAVIDSPV…VKELRKNVPA (86 aa)) is the PPIase FKBP-type domain.

This sequence belongs to the FKBP-type PPIase family. Tig subfamily.

It is found in the cytoplasm. It carries out the reaction [protein]-peptidylproline (omega=180) = [protein]-peptidylproline (omega=0). In terms of biological role, involved in protein export. Acts as a chaperone by maintaining the newly synthesized protein in an open conformation. Functions as a peptidyl-prolyl cis-trans isomerase. The chain is Trigger factor (tig) from Azospirillum brasilense.